The following is a 242-amino-acid chain: U1 small nuclear ribonucleoprotein C (242 aa).

A Matrin-type; degenerate zinc finger spans residues 3 to 35; the sequence is YLGDYCDVYLTHDSMSVRKAHNSGRNHLRNVVE. Residues 60–242 form a disordered region; sequence GQASSNPMLQ…SSPGPSQEGK (183 aa). 4 stretches are compositionally biased toward pro residues: residues 90 to 107, 136 to 149, 156 to 183, and 201 to 213; these read MLPP…PGAP, PPMP…PLPN, PFPP…PPIP, and PVPP…PGAP. A compositionally biased stretch (polar residues) spans 231-242; it reads PASSPGPSQEGK.

Belongs to the U1 small nuclear ribonucleoprotein C family. In terms of assembly, U1 snRNP is composed of the 7 core Sm proteins B/B', D1, D2, D3, E, F and G that assemble in a heptameric protein ring on the Sm site of the small nuclear RNA to form the core snRNP, and at least 3 U1 snRNP-specific proteins U1-70K, U1-A and U1-C. U1-C interacts with U1 snRNA and the 5' splice-site region of the pre-mRNA.

It is found in the nucleus. Component of the spliceosomal U1 snRNP, which is essential for recognition of the pre-mRNA 5' splice-site and the subsequent assembly of the spliceosome. U1-C is directly involved in initial 5' splice-site recognition for both constitutive and regulated alternative splicing. The interaction with the 5' splice-site seems to precede base-pairing between the pre-mRNA and the U1 snRNA. Stimulates commitment or early (E) complex formation by stabilizing the base pairing of the 5' end of the U1 snRNA and the 5' splice-site region. This chain is U1 small nuclear ribonucleoprotein C, found in Ajellomyces capsulatus (strain G186AR / H82 / ATCC MYA-2454 / RMSCC 2432) (Darling's disease fungus).